The primary structure comprises 225 residues: UPF0758 protein Shewmr7_0359 (225 aa).

Residues 102-224 enclose the MPN domain; it reads VLTNPDLTRD…IVSFAERGWI (123 aa). Residues H173, H175, and D186 each contribute to the Zn(2+) site. Positions 173-186 match the JAMM motif motif; that stretch reads HNHPSGIAEPSQAD.

It belongs to the UPF0758 family.

This chain is UPF0758 protein Shewmr7_0359, found in Shewanella sp. (strain MR-7).